A 523-amino-acid chain; its full sequence is MEPAAALHFSLPASLLLLLLLLLLSLCALVSAQFTVVGPANPILAMVGENTTLRCHLSPEKNAEDMEVRWFRSQFSPAVFVYKGGRERTEEQMEEYRGRITFVSKDINRGSVALVIHNVTAQENGIYRCYFQEGRSYDEAILRLVVAGLGSKPLIEIKAQEDGSIWLECISGGWYPEPLTVWRDPYGEVVPALKEVSIADADGLFMVTTAVIIRDKYVRNVSCSVNNTLLGQEKETVIFIPESFMPSASPWMVALAVILTASPWMVSMTVILAVFIIFMAVSICCIKKLQREKKILSGEKKVEQEEKEIAQQLQEELRWRRTFLHAADVVLDPDTAHPELFLSEDRRSVRRGPYRQRVPDNPERFDSQPCVLGWESFASGKHYWEVEVENVMVWTVGVCRHSVERKGEVLLIPQNGFWTLEMFGNQYRALSSPERILPLKESLCRVGVFLDYEAGDVSFYNMRDRSHIYTCPRSAFTVPVRPFFRLGSDDSPIFICPALTGASGVMVPEEGLKLHRVGTHQSL.

The N-terminal stretch at 1–32 (MEPAAALHFSLPASLLLLLLLLLLSLCALVSA) is a signal peptide. Residues 33–265 (QFTVVGPANP…AVILTASPWM (233 aa)) are Extracellular-facing. In terms of domain architecture, Ig-like V-type spans 34–145 (FTVVGPANPI…SYDEAILRLV (112 aa)). 4 N-linked (GlcNAc...) asparagine glycosylation sites follow: Asn50, Asn118, Asn220, and Asn226. Cys55 and Cys129 are oxidised to a cystine. The Ig-like C2-type domain occupies 153-234 (PLIEIKAQED…VNNTLLGQEK (82 aa)). Residues 266–286 (VSMTVILAVFIIFMAVSICCI) traverse the membrane as a helical segment. Residues 286-321 (IKKLQREKKILSGEKKVEQEEKEIAQQLQEELRWRR) adopt a coiled-coil conformation. The Cytoplasmic portion of the chain corresponds to 287-523 (KKLQREKKIL…LHRVGTHQSL (237 aa)). The B30.2/SPRY domain occupies 309–502 (IAQQLQEELR…IFICPALTGA (194 aa)).

It belongs to the immunoglobulin superfamily. BTN/MOG family. N-glycosylated. In terms of tissue distribution, highly expressed in brain, bone marrow, small intestine, muscle, spleen and pancreas. Moderate expression was seen in lung, liver and kidney.

It localises to the membrane. In terms of biological role, inhibits the proliferation of CD4 and CD8 T-cells activated by anti-CD3 antibodies, T-cell metabolism and IL2 and IFNG secretion. The chain is Butyrophilin subfamily 2 member A2 (BTN2A2) from Homo sapiens (Human).